Reading from the N-terminus, the 160-residue chain is Baculoviral IAP repeat-containing protein 5.1 (160 aa).

A BIR repeat occupies arginine 27–serine 97. A Phosphothreonine; by CDK1 modification is found at threonine 43. Zn(2+) contacts are provided by cysteine 66, cysteine 69, histidine 86, and cysteine 93.

It belongs to the IAP family. In terms of assembly, component of the CPC at least composed of survivin/birc5, incenp, cdca8/borealin and/or cdca9/dasra-A, and aurkb/aurora-B. Interacts directly with incenp (via N-terminus), and may weakly interact with aurkb (via N-terminus) to stabilize the complex. Interacts with GTP-bound ran in both the S and M phases of the cell cycle. Also found in a complex with ubiquitin-mediated signaling proteins including at least usp9x/xFAM, nploc4/npl4 and ufd1. Post-translationally, ubiquitination is required for centrosome-targeting.

Its subcellular location is the cytoplasm. It localises to the nucleus. The protein localises to the chromosome. It is found in the centromere. The protein resides in the cytoskeleton. Its subcellular location is the spindle. Component of the chromosomal passenger complex (CPC), a complex that acts as a key regulator of mitosis. The CPC complex has essential functions at the centromere in ensuring correct chromosome alignment and segregation and is required for chromatin-induced microtubule stabilization and spindle assembly. Stimulates the mitotic kinase activity of aurkb/aurora-B in the CPC. Does not appear to exhibit anti-apoptotic activity. The sequence is that of Baculoviral IAP repeat-containing protein 5.1 (birc5.1) from Xenopus tropicalis (Western clawed frog).